A 121-amino-acid chain; its full sequence is UPF0344 protein BT9727_1053 (121 aa).

4 helical membrane-spanning segments follow: residues I6–G26, L38–A58, W65–V85, and A92–L112.

The protein belongs to the UPF0344 family.

The protein resides in the cell membrane. The polypeptide is UPF0344 protein BT9727_1053 (Bacillus thuringiensis subsp. konkukian (strain 97-27)).